The chain runs to 473 residues: Serine palmitoyltransferase 1 (473 aa).

Residues 1–15 are Lumenal-facing; it reads MATATEQWVLVEMVQ. The interaction with SPTLC2 stretch occupies residues 1 to 66; the sequence is MATATEQWVL…KEELIEEWQP (66 aa). A helical membrane pass occupies residues 16 to 36; it reads ALYEAPAYHLILEGILILWII. Over 37–473 the chain is Cytoplasmic; that stretch reads RLLFSKTYKL…IKEVAQAVLL (437 aa). At Y164 the chain carries Phosphotyrosine; by ABL.

This sequence belongs to the class-II pyridoxal-phosphate-dependent aminotransferase family. In terms of assembly, component of the serine palmitoyltransferase (SPT) complex, which is also composed of SPTLC2 or SPTLC3 and SPTSSA or SPTSSB. The heterodimer consisting of SPTLC1 and SPTLC2/SPTLC3 forms the catalytic core of the enzyme, while SPTSSA or SPTSSB subunits determine substrate specificity. SPT also interacts with ORMDL proteins, especially ORMDL3, which negatively regulate SPT activity in the presence of ceramides. Forms dimers of heterodimers with SPTLC2. Interacts with RTN4 (isoform B). It depends on pyridoxal 5'-phosphate as a cofactor. In terms of processing, phosphorylation at Tyr-164 inhibits activity and promotes cell survival. In terms of tissue distribution, widely expressed. Not detected in small intestine.

The protein resides in the endoplasmic reticulum membrane. It catalyses the reaction L-serine + hexadecanoyl-CoA + H(+) = 3-oxosphinganine + CO2 + CoA. The catalysed reaction is octadecanoyl-CoA + L-serine + H(+) = 3-oxoeicosasphinganine + CO2 + CoA. It carries out the reaction tetradecanoyl-CoA + L-serine + H(+) = 3-oxohexadecasphinganine + CO2 + CoA. The enzyme catalyses dodecanoyl-CoA + L-serine + H(+) = 3-oxotetradecasphinganine + CO2 + CoA. The protein operates within lipid metabolism; sphingolipid metabolism. With respect to regulation, SPT complex catalytic activity is negatively regulated by ORMDL proteins, including ORMDL3, in the presence of ceramides. This mechanism allows to maintain ceramide levels at sufficient concentrations for the production of complex sphingolipids, but which prevents the accumulation of ceramides to levels that trigger apoptosis. In terms of biological role, component of the serine palmitoyltransferase multisubunit enzyme (SPT) that catalyzes the initial and rate-limiting step in sphingolipid biosynthesis by condensing L-serine and activated acyl-CoA (most commonly palmitoyl-CoA) to form long-chain bases. The SPT complex is also composed of SPTLC2 or SPTLC3 and SPTSSA or SPTSSB. Within this complex, the heterodimer with SPTLC2 or SPTLC3 forms the catalytic core. The composition of the serine palmitoyltransferase (SPT) complex determines the substrate preference. The SPTLC1-SPTLC2-SPTSSA complex shows a strong preference for C16-CoA substrate, while the SPTLC1-SPTLC3-SPTSSA isozyme uses both C14-CoA and C16-CoA as substrates, with a slight preference for C14-CoA. The SPTLC1-SPTLC2-SPTSSB complex shows a strong preference for C18-CoA substrate, while the SPTLC1-SPTLC3-SPTSSB isozyme displays an ability to use a broader range of acyl-CoAs, without apparent preference. Required for adipocyte cell viability and metabolic homeostasis. The polypeptide is Serine palmitoyltransferase 1 (SPTLC1) (Homo sapiens (Human)).